A 44-amino-acid chain; its full sequence is Photosystem I reaction center subunit IX (44 aa).

The helical transmembrane segment at 7 to 27 threads the bilayer; it reads YLSTAPVLATLWFGSLAGLLI.

This sequence belongs to the PsaJ family.

Its subcellular location is the plastid. The protein resides in the chloroplast thylakoid membrane. Its function is as follows. May help in the organization of the PsaE and PsaF subunits. In Cycas taitungensis (Prince sago), this protein is Photosystem I reaction center subunit IX.